The sequence spans 810 residues: Phenylalanine--tRNA ligase beta subunit (810 aa).

A tRNA-binding domain is found at 39–150; sequence RSWAAGVVLG…LDLPSGSPVG (112 aa). Positions 407 to 495 constitute a B5 domain; the sequence is RGEAIINLRL…RLYGYDHFCE (89 aa). Mg(2+) is bound by residues Asp-473, Asp-479, Glu-482, and Glu-483. The FDX-ACB domain occupies 716 to 809; the sequence is SPYPAVARDL…LTKQFAVSLR (94 aa).

This sequence belongs to the phenylalanyl-tRNA synthetase beta subunit family. Type 1 subfamily. As to quaternary structure, tetramer of two alpha and two beta subunits. Mg(2+) serves as cofactor.

It localises to the cytoplasm. It catalyses the reaction tRNA(Phe) + L-phenylalanine + ATP = L-phenylalanyl-tRNA(Phe) + AMP + diphosphate + H(+). This chain is Phenylalanine--tRNA ligase beta subunit (pheT), found in Synechocystis sp. (strain ATCC 27184 / PCC 6803 / Kazusa).